A 166-amino-acid polypeptide reads, in one-letter code: Small ribosomal subunit protein uS5 (166 aa).

One can recognise an S5 DRBM domain in the interval Leu11–Val74.

Belongs to the universal ribosomal protein uS5 family. Part of the 30S ribosomal subunit. Contacts proteins S4 and S8.

In terms of biological role, with S4 and S12 plays an important role in translational accuracy. Located at the back of the 30S subunit body where it stabilizes the conformation of the head with respect to the body. The chain is Small ribosomal subunit protein uS5 from Latilactobacillus sakei subsp. sakei (strain 23K) (Lactobacillus sakei subsp. sakei).